A 425-amino-acid chain; its full sequence is Probable proline--tRNA ligase, mitochondrial (425 aa).

The protein belongs to the class-II aminoacyl-tRNA synthetase family.

The protein localises to the mitochondrion. It catalyses the reaction tRNA(Pro) + L-proline + ATP = L-prolyl-tRNA(Pro) + AMP + diphosphate. In Schizosaccharomyces pombe (strain 972 / ATCC 24843) (Fission yeast), this protein is Probable proline--tRNA ligase, mitochondrial.